Here is a 312-residue protein sequence, read N- to C-terminus: Deoxyribonuclease-1-like 1 (312 aa).

Residues 1–35 (MPSGQPVFPRRVPDAYIAMRGLVVASLLILLVGGT) form the signal peptide. Asn-102 carries an N-linked (GlcNAc...) asparagine glycan. Glu-113 is an active-site residue. Asn-133 carries an N-linked (GlcNAc...) asparagine glycan. The active site involves His-164. A disulfide bridge links Cys-203 with Cys-240. Asn-239 is a glycosylation site (N-linked (GlcNAc...) asparagine).

The protein belongs to the DNase I family.

The protein resides in the endoplasmic reticulum. This is Deoxyribonuclease-1-like 1 (Dnase1l1) from Rattus norvegicus (Rat).